A 192-amino-acid polypeptide reads, in one-letter code: Protein FAM169BP (192 aa).

The tract at residues 121–192 (YQAHPGNSED…PPGKLTRSSP (72 aa)) is disordered. Over residues 159–177 (EELEDTKDDPECGVEEEDA) the composition is skewed to acidic residues.

Belongs to the FAM169 family.

The protein is Protein FAM169BP of Homo sapiens (Human).